The following is a 590-amino-acid chain: UvrABC system protein C (590 aa).

The GIY-YIG domain maps to 14–91 (EQPGCYLMKD…IKKHDPKYNV (78 aa)). The UVR domain maps to 196–231 (EDVKRELAEKMHEAAETLEFERAKEYRDQIAAIEMT).

The protein belongs to the UvrC family. In terms of assembly, interacts with UvrB in an incision complex.

The protein localises to the cytoplasm. In terms of biological role, the UvrABC repair system catalyzes the recognition and processing of DNA lesions. UvrC both incises the 5' and 3' sides of the lesion. The N-terminal half is responsible for the 3' incision and the C-terminal half is responsible for the 5' incision. In Geobacillus kaustophilus (strain HTA426), this protein is UvrABC system protein C.